A 143-amino-acid chain; its full sequence is Insulin-like growth factor 1 (143 aa).

An N-terminal signal peptide occupies residues 1-32 (MITPTVKMRILSSSHLFYLALCLLTFTSSATA). Residues 33–61 (GPETLCGAELVDALQFVCGDRGFYFNKPT) are b. 3 disulfide bridges follow: Cys38/Cys80, Cys50/Cys93, and Cys79/Cys84. The interval 62-73 (GYGSSSRRAPQT) is c. The a stretch occupies residues 74–94 (GIVDECCFRSCDLRRLEMYCA). The d stretch occupies residues 95 to 102 (PLKPAKAA). The interval 99-143 (AKAARSVRAQRHTDMPKTQKYQPPSTNKKMKSQRRRKGSTFEEHK) is disordered. A propeptide spans 103 to 143 (RSVRAQRHTDMPKTQKYQPPSTNKKMKSQRRRKGSTFEEHK) (e peptide). Residues 126-136 (KKMKSQRRRKG) are compositionally biased toward basic residues.

This sequence belongs to the insulin family. Forms a ternary complex with IGFR1 and ITGAV:ITGB3. Forms a ternary complex with IGFR1 and ITGA6:ITGB4. Forms a ternary complex with IGFBP3 and ALS.

Its subcellular location is the secreted. The insulin-like growth factors, isolated from plasma, are structurally and functionally related to insulin but have a much higher growth-promoting activity. May be a physiological regulator of [1-14C]-2-deoxy-D-glucose (2DG) transport and glycogen synthesis in osteoblasts. Stimulates glucose transport in bone-derived osteoblastic (PyMS) cells and is effective at much lower concentrations than insulin, not only regarding glycogen and DNA synthesis but also with regard to enhancing glucose uptake. May play a role in synapse maturation. Ca(2+)-dependent exocytosis of IGF1 is required for sensory perception of smell in the olfactory bulb. Acts as a ligand for IGF1R. Binds to the alpha subunit of IGF1R, leading to the activation of the intrinsic tyrosine kinase activity which autophosphorylates tyrosine residues in the beta subunit thus initiating a cascade of down-stream signaling events leading to activation of the PI3K-AKT/PKB and the Ras-MAPK pathways. Binds to integrins ITGAV:ITGB3 and ITGA6:ITGB4. Its binding to integrins and subsequent ternary complex formation with integrins and IGFR1 are essential for IGF1 signaling. Induces the phosphorylation and activation of IGFR1, MAPK3/ERK1, MAPK1/ERK2 and AKT1. As part of the MAPK/ERK signaling pathway, acts as a negative regulator of apoptosis in cardiomyocytes via promotion of STUB1/CHIP-mediated ubiquitination and degradation of ICER-type isoforms of CREM. The chain is Insulin-like growth factor 1 from Oryctolagus cuniculus (Rabbit).